The chain runs to 400 residues: Protein phosphatase methylesterase 1 (400 aa).

The interval 1 to 72 (MSDLQRTWAK…NQKLFARPQG (72 aa)) is disordered. The span at 19–28 (PFDEPQEEQG) shows a compositional bias: acidic residues. A compositionally biased stretch (low complexity) spans 44–54 (SSASSASSVSS). Residues 55 to 64 (TGTIIPSPNQ) show a composition bias toward polar residues. Residues S202, D228, and H358 contribute to the active site.

Belongs to the AB hydrolase superfamily.

The catalysed reaction is [phosphatase 2A protein]-C-terminal L-leucine methyl ester + H2O = [phosphatase 2A protein]-C-terminal L-leucine + methanol + H(+). Its function is as follows. Demethylates proteins that have been reversibly carboxymethylated. Demethylates the phosphatase PP2A catalytic subunit. The polypeptide is Protein phosphatase methylesterase 1 (PPE1) (Gibberella zeae (strain ATCC MYA-4620 / CBS 123657 / FGSC 9075 / NRRL 31084 / PH-1) (Wheat head blight fungus)).